The chain runs to 240 residues: Putative N-acetylmannosamine-6-phosphate 2-epimerase (240 aa).

This sequence belongs to the NanE family.

It carries out the reaction an N-acyl-D-glucosamine 6-phosphate = an N-acyl-D-mannosamine 6-phosphate. Its pathway is amino-sugar metabolism; N-acetylneuraminate degradation; D-fructose 6-phosphate from N-acetylneuraminate: step 3/5. Its function is as follows. Converts N-acetylmannosamine-6-phosphate (ManNAc-6-P) to N-acetylglucosamine-6-phosphate (GlcNAc-6-P). In Vibrio cholerae serotype O1 (strain ATCC 39541 / Classical Ogawa 395 / O395), this protein is Putative N-acetylmannosamine-6-phosphate 2-epimerase.